Consider the following 77-residue polypeptide: Sec-independent protein translocase protein TatA (77 aa).

The helical transmembrane segment at 1-21 (MGSFSIWHWLIVLVIVMLVFG) threads the bilayer. The tract at residues 40-77 (KDGMKEGNTDEPATPTPAKELRDSTTIDVEAKEKSRQQ) is disordered. Residues 58 to 77 (KELRDSTTIDVEAKEKSRQQ) show a composition bias toward basic and acidic residues.

The protein belongs to the TatA/E family. In terms of assembly, the Tat system comprises two distinct complexes: a TatABC complex, containing multiple copies of TatA, TatB and TatC subunits, and a separate TatA complex, containing only TatA subunits. Substrates initially bind to the TatABC complex, which probably triggers association of the separate TatA complex to form the active translocon.

It is found in the cell inner membrane. In terms of biological role, part of the twin-arginine translocation (Tat) system that transports large folded proteins containing a characteristic twin-arginine motif in their signal peptide across membranes. TatA could form the protein-conducting channel of the Tat system. The polypeptide is Sec-independent protein translocase protein TatA (Cupriavidus metallidurans (strain ATCC 43123 / DSM 2839 / NBRC 102507 / CH34) (Ralstonia metallidurans)).